Consider the following 100-residue polypeptide: Small ribosomal subunit protein uS14c (100 aa).

It belongs to the universal ribosomal protein uS14 family. In terms of assembly, part of the 30S ribosomal subunit.

It is found in the plastid. The protein resides in the chloroplast. Binds 16S rRNA, required for the assembly of 30S particles. This chain is Small ribosomal subunit protein uS14c, found in Thalassiosira pseudonana (Marine diatom).